The primary structure comprises 308 residues: Phenylcoumaran benzylic ether reductase Pyrc5 (308 aa).

NADP(+) contacts are provided by residues 11 to 17 (GGTGYIG), arginine 36, and lysine 45. Lysine 133 acts as the Proton acceptor in catalysis. Position 137 (arginine 137) interacts with NADP(+).

It belongs to the NmrA-type oxidoreductase family. Isoflavone reductase subfamily.

The enzyme catalyses (-)-dehydrodiconiferyl alcohol + NADPH + H(+) = (S)-isodihydrodehydrodiconiferyl alcohol + NADP(+). It catalyses the reaction (+)-dehydrodiconiferyl alcohol + NADPH + H(+) = (R)-isodihydrodehydrodiconiferyl alcohol + NADP(+). Functionally, oxidoreductase involved in lignan biosynthesis. Catalyzes the NADPH-dependent reduction of phenylcoumaran benzylic ethers. Converts dehydrodiconiferyl alcohol (DDC) to isodihydrodehydrodiconiferyl alcohol (IDDDC). The polypeptide is Phenylcoumaran benzylic ether reductase Pyrc5 (Pyrus communis (Pear)).